A 1482-amino-acid chain; its full sequence is Glutamate receptor ionotropic, NMDA 2B (1482 aa).

The first 26 residues, 1-26 (MKPSAECCSPKFWLVLAVLAVSGSKA), serve as a signal peptide directing secretion. Topologically, residues 27–557 (RSQKSAPSIG…SAFLEPFSAD (531 aa)) are extracellular. The N-linked (GlcNAc...) asparagine glycan is linked to N74. The cysteines at positions 86 and 321 are disulfide-linked. Residues H127 and E284 each contribute to the Zn(2+) site. N-linked (GlcNAc...) asparagine glycans are attached at residues N341, N348, N444, and N491. Intrachain disulfides connect C429-C456 and C436-C457. Positions 514 and 519 each coordinate L-glutamate. A glycan (N-linked (GlcNAc...) asparagine) is linked at N542. The helical transmembrane segment at 558 to 576 (VWVMMFVMLLIVSAVAVFV) threads the bilayer. The Cytoplasmic segment spans residues 577–603 (FEYFSPVGYNRCLADGREPGGPSFTIG). Residues 604–623 (KAIWLLWGLVFNNSVPVQNP) constitute an intramembrane region (discontinuously helical). Positions 604-623 (KAIWLLWGLVFNNSVPVQNP) are pore-forming. The Cytoplasmic portion of the chain corresponds to 624–630 (KGTTSKI). A helical transmembrane segment spans residues 631-646 (MVSVWAFFAVIFLASY). At 647–817 (TANLAAFMIQ…VMSSQLDIDN (171 aa)) the chain is on the extracellular side. Residue N688 is glycosylated (N-linked (GlcNAc...) asparagine). L-glutamate-binding positions include 690–691 (ST) and D732. C746 and C801 form a disulfide bridge. The helical transmembrane segment at 818-837 (MAGVFYMLGAAMALSLITFI) threads the bilayer. Topologically, residues 838-1482 (CEHLFYWQFR…EKLSSIESDV (645 aa)) are cytoplasmic. 4 positions are modified to phosphoserine: S882, S886, S917, and S920. Residues Y962 and Y1039 each carry the phosphotyrosine modification. S1058, S1061, and S1064 each carry phosphoserine. The disordered stretch occupies residues 1074–1097 (EGNAAKRRKQQYKDSLKKRPASAK). A phosphotyrosine mark is found at Y1109 and Y1133. The residue at position 1143 (S1143) is a Phosphoserine. Y1155 carries the post-translational modification Phosphotyrosine. The tract at residues 1162–1194 (FKRDSVSGGGPCTNRSHLKHGTGDKHGVVGGVP) is disordered. 2 positions are modified to phosphoserine: S1255 and S1259. Residues 1266 to 1277 (PAAPVAVSSNAS) are compositionally biased toward low complexity. The interval 1266–1301 (PAAPVAVSSNASTTKYPQSPTNSKAQKKNRNKLRRQ) is disordered. Positions 1278-1289 (TTKYPQSPTNSK) are enriched in polar residues. The span at 1290 to 1301 (AQKKNRNKLRRQ) shows a compositional bias: basic residues. Residues 1292–1304 (KKNRNKLRRQHSY) form an interaction with DAPK1 region. At S1303 the chain carries Phosphoserine; by DAPK1. Residue Y1472 is modified to Phosphotyrosine. The PDZ-binding motif lies at 1480–1482 (SDV).

Belongs to the glutamate-gated ion channel (TC 1.A.10.1) family. NR2B/GRIN2B subfamily. Heterotetramer. Forms heterotetrameric channels composed of two GluN1/zeta subunits (GRIN1), and two identical GluN2/epsilon subunits (GRIN2A, GRIN2B, GRIN2C or GRIN2D) or GluN3 subunits (GRIN3A or GRIN3B) (in vitro). Can also form heterotetrameric channels that contain at least two GluN1 subunits and at least two different GluN2 subunits (or a combination of one GluN2 and one GluN3 subunits) (in vitro). In vivo, the subunit composition may depend on the expression levels of the different subunits. Found in a complex with GRIN1, GRIN3A and PPP2CB. Interacts with MAGI3. Interacts with HIP1 and NETO1. Interacts with PDZ domains of PATJ, DLG3 and DLG4. Interacts with DAPK1. Found in a complex with GRIN1 and PRR7. Interacts with PRR7. Interacts with CAMK2A. Interacts with ARC; preventing ARC oligomerization. Interacts with TMEM25. Interacts (via the extreme C-terminus) with FRMPD2 (via the second PDZ domain); the interaction is direct and is likely to promote NMDAR-mediated neural signal transmission. GRIN2A binds FRMPD2 with lower affinity than GRIN2B. Interacts with FAM81A; the interaction facilitates condensate formation via liquid-liquid phase separation. Post-translationally, phosphorylated on tyrosine residues. Phosphorylation at Ser-1303 by DAPK1 enhances synaptic NMDA receptor channel activity. In terms of tissue distribution, detected in brain (at protein level). Detected throughout the brain, and in brain stem trigeminal nucleus. Detected in forebrain.

It is found in the cell membrane. It localises to the postsynaptic cell membrane. Its subcellular location is the cell projection. The protein localises to the dendrite. The protein resides in the late endosome. It is found in the lysosome. It localises to the cytoplasm. Its subcellular location is the cytoskeleton. It catalyses the reaction Ca(2+)(in) = Ca(2+)(out). The enzyme catalyses Na(+)(in) = Na(+)(out). The catalysed reaction is K(+)(in) = K(+)(out). Its function is as follows. Component of N-methyl-D-aspartate (NMDA) receptors (NMDARs) that function as heterotetrameric, ligand-gated cation channels with high calcium permeability and voltage-dependent block by Mg(2+). Participates in synaptic plasticity for learning and memory formation by contributing to the long-term depression (LTD) of hippocampus membrane currents. Channel activation requires binding of the neurotransmitter L-glutamate to the GluN2 subunit, glycine or D-serine binding to the GluN1 subunit, plus membrane depolarization to eliminate channel inhibition by Mg(2+). NMDARs mediate simultaneously the potasium efflux and the influx of calcium and sodium. Each GluN2 subunit confers differential attributes to channel properties, including activation, deactivation and desensitization kinetics, pH sensitivity, Ca2(+) permeability, and binding to allosteric modulators. In concert with DAPK1 at extrasynaptic sites, acts as a central mediator for stroke damage. Its phosphorylation at Ser-1303 by DAPK1 enhances synaptic NMDA receptor channel activity inducing injurious Ca2+ influx through them, resulting in an irreversible neuronal death. The sequence is that of Glutamate receptor ionotropic, NMDA 2B from Mus musculus (Mouse).